A 965-amino-acid chain; its full sequence is Receptor-like protein 15 (965 aa).

An N-terminal signal peptide occupies residues 1 to 23; the sequence is MEGKVFLGHNLIWVMLLMGQLHG. Residues 24-916 are Extracellular-facing; sequence YKSCIDEEKI…GVEADESIID (893 aa). N-linked (GlcNAc...) asparagine glycosylation is found at N57, N95, N109, and N145. 17 LRR repeats span residues 80–102, 103–127, 131–154, 156–179, 180–204, 206–230, 243–267, 268–290, 292–315, 316–341, 342–365, 366–389, 391–415, 417–435, 437–461, 462–485, and 487–512; these read EISFGGLSLKDNSLLNLSLLHPF, EDVRSLNLSSSRCSGLFDDVEGYKS, LRKLEILDLASNKFNNSIFHFLSA, TSLTTLFLRSNNMDGSFPAKELRD, LTNLELLDLSRNRFNGSIPIQELSS, RKLKALDLSGNEFSGSMELQGKFCT, LNNMQELDLSQNKLVGHLPSCLTSL, TGLRVLDLSSNKLTGTVPSSLGS, QSLEYLSLFDNDFEGSFSFGSLAN, LSNLMVLKLCSKSSSLQVLSESSWKP, KFQLSVIALRSCNMEKVPHFLLHQ, KDLRHVDLSDNNISGKLPSWLLAN, TKLKVLLLQNNLFTSFQIPKSAHNL, FLDVSANDFNHLFPENIGW, FPHLRYLNTSKNNFQENLPSSLGNM, NGIQYMDLSRNSFHGNLPRSFVNG, and YSMAILKLSHNKLSGEIFPESTNFTN. N-linked (GlcNAc...) asparagine glycosylation is present at N194. An N-linked (GlcNAc...) asparagine glycan is attached at N315. Residues N377 and N389 are each glycosylated (N-linked (GlcNAc...) asparagine). A glycan (N-linked (GlcNAc...) asparagine) is linked at N444. N509 carries an N-linked (GlcNAc...) asparagine glycan. The LRR 18; degenerate repeat unit spans residues 514–533; it reads LGLFMDNNLFTGKIGQGLRS. 11 LRR repeats span residues 534-557, 558-582, 584-606, 608-627, 628-652, 654-674, 675-698, 778-801, 802-825, 827-850, and 851-875; these read LINLELLDMSNNNLTGVIPSWIGE, LPSLTALLISDNFLKGDIPMSLFNK, SLQLLDLSANSLSGVIPPQHDSR, GVVLLLQDNKLSGTIPDTLL, ANVEILDLRNNRFSGKIPEFINIQN, SILLLRGNNFTGQIPHQLCGL, SNIQLLDLSNNRLNGTIPSCLSNT, LKLLFGMDLSENELSGEIPVEFGG, LLELRALNLSHNNLSGVIPKSISS, EKMESFDLSFNRLQGRIPSQLTEL, and TSLSVFKVSHNNLSGVIPQGRQFNT. N546 and N581 each carry an N-linked (GlcNAc...) asparagine glycan. Residues N652, N662, N688, and N697 are each glycosylated (N-linked (GlcNAc...) asparagine). N-linked (GlcNAc...) asparagine glycans are attached at residues N809 and N814. N-linked (GlcNAc...) asparagine glycans are attached at residues N862, N893, and N898. Residues 917–937 form a helical membrane-spanning segment; the sequence is MVSFYLSFAAAYVTILIGILA. The Cytoplasmic segment spans residues 938 to 965; sequence SLSFDSPWSRFWFYKVDAFIKKVRNLLL.

This sequence belongs to the RLP family.

It is found in the cell membrane. The sequence is that of Receptor-like protein 15 from Arabidopsis thaliana (Mouse-ear cress).